The chain runs to 382 residues: MKQPVIIAAKRIAFGKYGGRLKHLEPESLLEPLFNHFTDQYPKVMSLLDDVILGNTVGNGGNLARKSLLEAGLDFKIPGITIDRQCGSGLEAVIQACRMVQSGAGTIYIAGGVESTSRAPWKIKRPQSVYESEFPQFFERAPFAREGEDPSMIEAAENVAKKYHISRNEQDDFAYRSHQLASKNMNNGNISQEILPFKVKGECFNQDESIKPQLTLKTLGRLKPLLNEGTVTVGNSCMKNDGAVLLIVMEENRARQLGFTEGIKFVNSATVGVQPQYLGVGPVPAVNQLLARERLTINDINAVELNEAFSSQVIASQQQLNIPLNKLNCWGGAIATGHPYGASGAALVTRLFYMKHQFRTVATMGIGGGIGNAALFERWYGN.

C86 serves as the catalytic Acyl-thioester intermediate. Catalysis depends on H338, which acts as the Proton acceptor.

The protein belongs to the thiolase-like superfamily. Thiolase family.

In Staphylococcus epidermidis (strain ATCC 35984 / DSM 28319 / BCRC 17069 / CCUG 31568 / BM 3577 / RP62A), this protein is Putative acetyl-CoA C-acetyltransferase VraB (vraB).